A 436-amino-acid chain; its full sequence is MHVDIGAALASAADPGVERATLDDLDEQVAVAHERIEQGRNKGEFGYASLNLLEATDAETIHDAVAPVADAESVITVGIGGSALGAKTITEALAEDPGSHVVLDNVDPEHVRRTLDGLSLADTAINVVSRSGTTAETLANFLVVREAYEDRGVDWTERIVVTTGESGPLRALADQHDLPTLPVPEGVPGRFSALSAVGLVPPAILGIDIEGLLAGGQQAADDLAPSLYDSPAYAYGAMAYALEEAGATVNAVMPYAERLESFGEWFAQLWAESLGKDGRGQTPARALGATDQHSQLQLYRAGHRDKVVTFVRPRERADVSIPDPDHEDLSYLAGTDLGGLIDAEYEATVASLPAADRPALEVEIDRLDAESVGELLYAMEAACVLVGELADVETFTQPAVEWGKNATRALIRGEATDETAVIDERERLRIGETESL.

Residue Glu-272 is the Proton donor of the active site. Residues His-293 and Lys-404 contribute to the active site.

Belongs to the GPI family.

It localises to the cytoplasm. It carries out the reaction alpha-D-glucose 6-phosphate = beta-D-fructose 6-phosphate. The protein operates within carbohydrate biosynthesis; gluconeogenesis. It participates in carbohydrate degradation; glycolysis; D-glyceraldehyde 3-phosphate and glycerone phosphate from D-glucose: step 2/4. Catalyzes the reversible isomerization of glucose-6-phosphate to fructose-6-phosphate. The chain is Probable glucose-6-phosphate isomerase from Haloarcula marismortui (strain ATCC 43049 / DSM 3752 / JCM 8966 / VKM B-1809) (Halobacterium marismortui).